A 130-amino-acid chain; its full sequence is Ribonuclease VapC46 (130 aa).

Positions 4-118 (IYLDSSAIVK…CTYDDRMRDA (115 aa)) constitute a PINc domain. Positions 7 and 91 each coordinate Mg(2+).

Belongs to the PINc/VapC protein family. Requires Mg(2+) as cofactor.

Toxic component of a type II toxin-antitoxin (TA) system. An RNase. Upon expression in M.smegmatis inhibits colony formation. Its toxic effect is neutralized by coexpression with cognate antitoxin VapB46. This chain is Ribonuclease VapC46, found in Mycobacterium tuberculosis (strain ATCC 25618 / H37Rv).